The sequence spans 398 residues: O-methyltransferase aoiO (398 aa).

Aspartate 251 contacts S-adenosyl-L-methionine. The active-site Proton acceptor is the histidine 299.

Belongs to the class I-like SAM-binding methyltransferase superfamily. Cation-independent O-methyltransferase family.

In terms of biological role, O-methyltransferase; part of the gene cluster that mediates the biosynthesis of a methylated derivative of known natural products orthosporin and diaporthin. Seems not to be involved in the biosynthesis of the identified final product of the pathway and its function has still to be determined. This Aspergillus oryzae (strain ATCC 42149 / RIB 40) (Yellow koji mold) protein is O-methyltransferase aoiO.